A 131-amino-acid polypeptide reads, in one-letter code: Holin-like protein CidA (131 aa).

4 consecutive transmembrane segments (helical) span residues 4–24 (VQLI…TYIG), 30–50 (IFHL…LLLQ), 65–85 (FLLK…MDVA), and 88–108 (ITLN…IVAL).

This sequence belongs to the CidA/LrgA family. CidA subfamily.

The protein localises to the cell membrane. In terms of biological role, increases the activity of extracellular murein hydrolases possibly by mediating their export via hole formation. Inhibited by the antiholin-like proteins LrgAB. In an unstressed cell, the LrgAB products probably inhibit the function of the CidAB proteins. When a cell is stressed by the addition of antibiotics or by other factors in the environment, the CidAB proteins possibly oligomerize within the bacterial cell membrane, creating lesions that disrupt the proton motive force, which in turn results in loss of cell viability. These lesions are also hypothesized to regulate the subsequent cell lysis by either allowing the murein hydrolases access to the cell wall substrate and/or regulating their activity by a possible change in the cell wall pH that results from loss of membrane potential. The protein is Holin-like protein CidA of Staphylococcus aureus (strain Mu3 / ATCC 700698).